Consider the following 185-residue polypeptide: Gastrokine-1 (185 aa).

Positions 1–20 (MKFTIVFAGLLGVFLAPALA) are cleaved as a signal peptide. The BRICHOS domain occupies 54-150 (NNGWDSWNSI…MCRGIPTYMA (97 aa)). A disulfide bridge connects residues Cys-81 and Cys-142.

Belongs to the gastrokine family. In terms of tissue distribution, expressed in stomach (at protein level). No expression is detected in cancer tissue or gastric cancer cell lines.

It is found in the secreted. It localises to the cytoplasmic granule. The protein resides in the golgi apparatus. In terms of biological role, has mitogenic activity and may be involved in maintaining the integrity of the gastric mucosal epithelium. This chain is Gastrokine-1 (GKN1), found in Homo sapiens (Human).